A 299-amino-acid chain; its full sequence is Protein NSG2 (299 aa).

Topologically, residues 1–108 (MANRGEPDPK…PSRTRQTRQN (108 aa)) are cytoplasmic. S90 is subject to Phosphoserine. Residues 109-129 (ILHYLQAVLILSLSGFAYHEL) traverse the membrane as a helical segment. At 130–161 (SRNLHDNHLLHPDFASRPLLLGVKLCNWLSNG) the chain is on the lumenal side. Residues 162–182 (VLPNWLGYGVEGLLFGSVVPI) form a helical membrane-spanning segment. Over 183–237 (LDNIFQTEVVKSSVHHDSLTSVIRSINAMLGVTFGIRKIQWNSSLQAAGAWGLLN) the chain is Cytoplasmic. The chain crosses the membrane as a helical span at residues 238–258 (IILWLFFDGSISMLMSCICIG). Over 259 to 268 (VGCCISCYKD) the chain is Lumenal. A helical membrane pass occupies residues 269-289 (IIDGSQFLYFMDFYFLGSLMF). The Cytoplasmic portion of the chain corresponds to 290-299 (GKLGRYLYSH).

This sequence belongs to the INSIG family.

The protein localises to the endoplasmic reticulum membrane. In terms of biological role, stabilizes the HMG-CoA reductase HMG2 by preventing its HRD1-dependent degradation. Binds directly to the sterol-sensing domain (SSD)-containing transmembrane region of HMG2, promoting its folding to protect it from degradation. The chain is Protein NSG2 (NSG2) from Saccharomyces cerevisiae (strain ATCC 204508 / S288c) (Baker's yeast).